The following is a 100-amino-acid chain: Urease subunit gamma (100 aa).

The protein belongs to the urease gamma subunit family. Heterotrimer of UreA (gamma), UreB (beta) and UreC (alpha) subunits. Three heterotrimers associate to form the active enzyme.

It is found in the cytoplasm. It carries out the reaction urea + 2 H2O + H(+) = hydrogencarbonate + 2 NH4(+). Its pathway is nitrogen metabolism; urea degradation; CO(2) and NH(3) from urea (urease route): step 1/1. The polypeptide is Urease subunit gamma (Ruegeria sp. (strain TM1040) (Silicibacter sp.)).